The sequence spans 227 residues: Cleavage and polyadenylation specificity factor subunit 5 (227 aa).

Ser2 bears the N-acetylserine mark. A necessary for RNA-binding region spans residues 2–147; sequence SVVPPNRSQT…DWVIDDCIGN (146 aa). An Omega-N-methylarginine modification is found at Arg15. N6-acetyllysine occurs at positions 23 and 29. A Phosphotyrosine modification is found at Tyr40. An N6-acetyllysine modification is found at Lys56. The region spanning 76–201 is the Nudix hydrolase domain; that stretch reads MRRTVEGVLI…KLVAAPLFEL (126 aa). The segment at 81-160 is necessary for interactions with PAPOLA and PABPN1; that stretch reads EGVLIVHEHR…PNFEPPQYPY (80 aa). The tract at residues 102 to 104 is interaction with RNA; it reads TFF. The Nudix box signature appears at 109–130; it reads GELNPGEDEVEGLKRLMTEILG.

It belongs to the Nudix hydrolase family. CPSF5 subfamily. As to quaternary structure, homodimer (via N- and C-terminus); binds RNA as homodimer. Component of the cleavage factor Im (CFIm) complex which is a heterotetramer composed of two subunits of NUDT21/CPSF5 and two subunits of CPSF6 or CPSF7 or a heterodimer of CPSF6 and CPSF7. The cleavage factor Im (CFIm) complex associates with the CPSF and CSTF complexes to promote the assembly of the core mRNA 3'-processing machinery. Interacts with CPSF6 (via the RRM domain); this interaction is direct and enhances binding to RNA. Interacts with CPSF7. Interacts with FIP1L1; this interaction occurs in a RNA sequence-specific manner. Interacts with PABPN1. Interacts (via N-terminus) with PAPOLA (via C-terminus); this interaction is direct and diminished by acetylation. Interacts with SNRNP70. Interacts with VIRMA. In terms of processing, acetylated mainly by p300/CBP, recruited to the complex by CPSF6. Acetylation decreases interaction with PAPAO. Deacetylated by the class I/II HDACs, HDAC1, HDAC3 and HDAC10, and by the class III HDACs, SIRT1 and SIRT2.

Its subcellular location is the nucleus. It localises to the cytoplasm. Functionally, component of the cleavage factor Im (CFIm) complex that functions as an activator of the pre-mRNA 3'-end cleavage and polyadenylation processing required for the maturation of pre-mRNA into functional mRNAs. CFIm contributes to the recruitment of multiprotein complexes on specific sequences on the pre-mRNA 3'-end, so called cleavage and polyadenylation signals (pA signals). Most pre-mRNAs contain multiple pA signals, resulting in alternative cleavage and polyadenylation (APA) producing mRNAs with variable 3'-end formation. The CFIm complex acts as a key regulator of cleavage and polyadenylation site choice during APA through its binding to 5'-UGUA-3' elements localized in the 3'-untranslated region (UTR) for a huge number of pre-mRNAs. NUDT21/CPSF5 activates indirectly the mRNA 3'-processing machinery by recruiting CPSF6 and/or CPSF7. Binds to 5'-UGUA-3' elements localized upstream of pA signals that act as enhancers of pre-mRNA 3'-end processing. The homodimer mediates simultaneous sequence-specific recognition of two 5'-UGUA-3' elements within the pre-mRNA. Plays a role in somatic cell fate transitions and pluripotency by regulating widespread changes in gene expression through an APA-dependent function. Binds to chromatin. Binds to, but does not hydrolyze mono- and di-adenosine nucleotides. This is Cleavage and polyadenylation specificity factor subunit 5 (NUDT21) from Bos taurus (Bovine).